A 298-amino-acid chain; its full sequence is Protoheme IX farnesyltransferase (298 aa).

8 helical membrane passes run Val24–Pro44, Trp46–Phe66, Leu97–Pro117, Leu118–Leu138, Ile146–Gly166, Ala172–Leu192, Leu231–Gly251, and Ile278–Val298.

Belongs to the UbiA prenyltransferase family. Protoheme IX farnesyltransferase subfamily.

The protein localises to the cell inner membrane. It catalyses the reaction heme b + (2E,6E)-farnesyl diphosphate + H2O = Fe(II)-heme o + diphosphate. It functions in the pathway porphyrin-containing compound metabolism; heme O biosynthesis; heme O from protoheme: step 1/1. In terms of biological role, converts heme B (protoheme IX) to heme O by substitution of the vinyl group on carbon 2 of heme B porphyrin ring with a hydroxyethyl farnesyl side group. The sequence is that of Protoheme IX farnesyltransferase from Thiobacillus denitrificans (strain ATCC 25259 / T1).